We begin with the raw amino-acid sequence, 352 residues long: D-alanine--D-alanine ligase (352 aa).

The ATP-grasp domain maps to 135–344 (KTVFAKAGLP…FPQLVDRLIE (210 aa)). 171-226 (EETLNYPCFVKPANLGSSVGIAKVRSRSELEKALDQAASYDRRIIVEAGVIAREVE) contributes to the ATP binding site. Mg(2+) is bound by residues D297, E311, and N313.

This sequence belongs to the D-alanine--D-alanine ligase family. The cofactor is Mg(2+). Mn(2+) is required as a cofactor.

It localises to the cytoplasm. The enzyme catalyses 2 D-alanine + ATP = D-alanyl-D-alanine + ADP + phosphate + H(+). The protein operates within cell wall biogenesis; peptidoglycan biosynthesis. Cell wall formation. This chain is D-alanine--D-alanine ligase, found in Gloeothece citriformis (strain PCC 7424) (Cyanothece sp. (strain PCC 7424)).